We begin with the raw amino-acid sequence, 303 residues long: Protein UL24 homolog (303 aa).

The segment covering 235 to 249 (KFRDRTNKKSNDQLR) has biased composition (basic and acidic residues). The tract at residues 235 to 280 (KFRDRTNKKSNDQLRARQANARPCKKKQHNNKRLRNNRKHGGKVSR) is disordered. Over residues 257 to 277 (PCKKKQHNNKRLRNNRKHGGK) the composition is skewed to basic residues.

This sequence belongs to the herpesviridae UL24 family.

It localises to the virion. Its subcellular location is the host cytoplasm. The protein localises to the host nucleus. The protein resides in the host nucleolus. It is found in the host Golgi apparatus. Its function is as follows. May participate in nuclear egress of viral particles. Plays a role in the dispersal of several host nucleolar proteins including NCL/nucleolin and NPM1. Since deletion of host NCL/nucleolin negatively impact on nuclear egress, UL24 supposedly acts on this process through its effect on host nucleoli. The sequence is that of Protein UL24 homolog (20) from Saimiri sciureus (Common squirrel monkey).